A 404-amino-acid chain; its full sequence is Probable eukaryotic initiation factor 4A (404 aa).

The disordered stretch occupies residues 1–28 (MAQQGKVEPQDQDSFLDDQPGIRPIPSF). Positions 26-54 (PSFDDMPLHQNLLRGIYSHGFEKPSSIQQ) match the Q motif motif. The Helicase ATP-binding domain occupies 57–231 (IVPFTRGGDI…KKFMRDPTRI (175 aa)). Residue 70-77 (AQSGTGKT) participates in ATP binding. The DEAD box motif lies at 179-182 (DEAD). A Helicase C-terminal domain is found at 242 to 402 (GIKQYFIAVE…ELPVDFAAYL (161 aa)).

Belongs to the DEAD box helicase family. eIF4A subfamily. EIF4F is a multi-subunit complex, the composition of which varies with external and internal environmental conditions. It is composed of at least EIF4A, EIF4E and EIF4G.

The catalysed reaction is ATP + H2O = ADP + phosphate + H(+). Functionally, ATP-dependent RNA helicase which is a subunit of the eIF4F complex involved in cap recognition and is required for mRNA binding to ribosome. In the current model of translation initiation, eIF4A unwinds RNA secondary structures in the 5'-UTR of mRNAs which is necessary to allow efficient binding of the small ribosomal subunit, and subsequent scanning for the initiator codon. The sequence is that of Probable eukaryotic initiation factor 4A from Trypanosoma cruzi (strain CL Brener).